The chain runs to 618 residues: 1-deoxy-D-xylulose-5-phosphate synthase (618 aa).

Thiamine diphosphate-binding positions include H73 and 114–116 (GHS). Residue D145 coordinates Mg(2+). Thiamine diphosphate is bound by residues 146 to 147 (GA), N174, Y284, and E364. N174 is a binding site for Mg(2+).

This sequence belongs to the transketolase family. DXPS subfamily. In terms of assembly, homodimer. Mg(2+) serves as cofactor. Thiamine diphosphate is required as a cofactor.

It carries out the reaction D-glyceraldehyde 3-phosphate + pyruvate + H(+) = 1-deoxy-D-xylulose 5-phosphate + CO2. The protein operates within metabolic intermediate biosynthesis; 1-deoxy-D-xylulose 5-phosphate biosynthesis; 1-deoxy-D-xylulose 5-phosphate from D-glyceraldehyde 3-phosphate and pyruvate: step 1/1. In terms of biological role, catalyzes the acyloin condensation reaction between C atoms 2 and 3 of pyruvate and glyceraldehyde 3-phosphate to yield 1-deoxy-D-xylulose-5-phosphate (DXP). This chain is 1-deoxy-D-xylulose-5-phosphate synthase, found in Clostridium beijerinckii (strain ATCC 51743 / NCIMB 8052) (Clostridium acetobutylicum).